Reading from the N-terminus, the 344-residue chain is Dihydroorotase (344 aa).

H14 and H16 together coordinate Zn(2+). Residues 16 to 18 (HLR) and N42 each bind substrate. Zn(2+)-binding residues include K100, H137, and H175. K100 carries the N6-carboxylysine modification. Residue H137 participates in substrate binding. L220 serves as a coordination point for substrate. D248 serves as a coordination point for Zn(2+). Residue D248 is part of the active site. Residues H252 and A264 each contribute to the substrate site.

It belongs to the metallo-dependent hydrolases superfamily. DHOase family. Class II DHOase subfamily. In terms of assembly, homodimer. It depends on Zn(2+) as a cofactor.

It catalyses the reaction (S)-dihydroorotate + H2O = N-carbamoyl-L-aspartate + H(+). It functions in the pathway pyrimidine metabolism; UMP biosynthesis via de novo pathway; (S)-dihydroorotate from bicarbonate: step 3/3. Functionally, catalyzes the reversible cyclization of carbamoyl aspartate to dihydroorotate. The polypeptide is Dihydroorotase (Ralstonia pickettii (strain 12J)).